Reading from the N-terminus, the 1378-residue chain is F-box protein At3g54460 (1378 aa).

The span at Gly65–Gly96 shows a compositional bias: basic and acidic residues. The interval Gly65–Glu113 is disordered. Residues Lys97–Val107 are compositionally biased toward basic residues. Positions Val282 to Leu328 constitute an F-box domain. The CW-type zinc-finger motif lies at Asp571–Asp622. Residues Cys580, Cys583, Cys603, and Cys614 each contribute to the Zn(2+) site. The 166-residue stretch at Lys720–Phe885 folds into the Helicase ATP-binding domain. Asp733–Ala740 lines the ATP pocket. Residues Asp834 to His837 carry the DEAH box motif. Residues Asp1185–Ser1324 enclose the Helicase C-terminal domain.

The protein belongs to the helicase family.

The protein is F-box protein At3g54460 of Arabidopsis thaliana (Mouse-ear cress).